We begin with the raw amino-acid sequence, 245 residues long: tRNA1(Val) (adenine(37)-N6)-methyltransferase (245 aa).

It belongs to the methyltransferase superfamily. tRNA (adenine-N(6)-)-methyltransferase family.

It localises to the cytoplasm. The catalysed reaction is adenosine(37) in tRNA1(Val) + S-adenosyl-L-methionine = N(6)-methyladenosine(37) in tRNA1(Val) + S-adenosyl-L-homocysteine + H(+). Its function is as follows. Specifically methylates the adenine in position 37 of tRNA(1)(Val) (anticodon cmo5UAC). This chain is tRNA1(Val) (adenine(37)-N6)-methyltransferase, found in Salmonella typhi.